A 287-amino-acid polypeptide reads, in one-letter code: Bifunctional protein FolD (287 aa).

NADP(+)-binding positions include Gly166–Ser168 and Ile232.

It belongs to the tetrahydrofolate dehydrogenase/cyclohydrolase family. Homodimer.

The enzyme catalyses (6R)-5,10-methylene-5,6,7,8-tetrahydrofolate + NADP(+) = (6R)-5,10-methenyltetrahydrofolate + NADPH. The catalysed reaction is (6R)-5,10-methenyltetrahydrofolate + H2O = (6R)-10-formyltetrahydrofolate + H(+). Its pathway is one-carbon metabolism; tetrahydrofolate interconversion. Catalyzes the oxidation of 5,10-methylenetetrahydrofolate to 5,10-methenyltetrahydrofolate and then the hydrolysis of 5,10-methenyltetrahydrofolate to 10-formyltetrahydrofolate. The protein is Bifunctional protein FolD of Pectobacterium atrosepticum (strain SCRI 1043 / ATCC BAA-672) (Erwinia carotovora subsp. atroseptica).